A 485-amino-acid chain; its full sequence is Rhamnulokinase (485 aa).

12-16 (ATSGR) is an ATP binding site. Substrate contacts are provided by residues G80 and 238 to 240 (HDT). D239 (proton acceptor) is an active-site residue. Position 261 (T261) interacts with ATP. Position 298 (N298) interacts with substrate. E306 contacts ATP. Residues C355 and C372 are joined by a disulfide bond. G404 serves as a coordination point for ATP.

This sequence belongs to the rhamnulokinase family. Mg(2+) is required as a cofactor.

The catalysed reaction is L-rhamnulose + ATP = L-rhamnulose 1-phosphate + ADP + H(+). It functions in the pathway carbohydrate degradation; L-rhamnose degradation; glycerone phosphate from L-rhamnose: step 2/3. Functionally, involved in the catabolism of L-rhamnose (6-deoxy-L-mannose). Catalyzes the transfer of the gamma-phosphate group from ATP to the 1-hydroxyl group of L-rhamnulose to yield L-rhamnulose 1-phosphate. This is Rhamnulokinase from Bacteroides thetaiotaomicron (strain ATCC 29148 / DSM 2079 / JCM 5827 / CCUG 10774 / NCTC 10582 / VPI-5482 / E50).